The chain runs to 470 residues: tRNA modification GTPase MnmE (470 aa).

R30, E92, and R132 together coordinate (6S)-5-formyl-5,6,7,8-tetrahydrofolate. The TrmE-type G domain maps to G227–G393. N237 contributes to the K(+) binding site. GTP-binding positions include N237 to S242, T256 to T262, D281 to G284, and N342 to D345. Residue S241 coordinates Mg(2+). 3 residues coordinate K(+): T256, L258, and T261. A Mg(2+)-binding site is contributed by T262. K470 contributes to the (6S)-5-formyl-5,6,7,8-tetrahydrofolate binding site.

The protein belongs to the TRAFAC class TrmE-Era-EngA-EngB-Septin-like GTPase superfamily. TrmE GTPase family. Homodimer. Heterotetramer of two MnmE and two MnmG subunits. K(+) serves as cofactor.

The protein resides in the cytoplasm. Functionally, exhibits a very high intrinsic GTPase hydrolysis rate. Involved in the addition of a carboxymethylaminomethyl (cmnm) group at the wobble position (U34) of certain tRNAs, forming tRNA-cmnm(5)s(2)U34. This Prochlorococcus marinus (strain MIT 9313) protein is tRNA modification GTPase MnmE.